The following is a 553-amino-acid chain: MTQVDTAPSNFIRNIIDSDLQSGKHQVIHTRFPPEPNGYLHIGHAKSICLNFGLAEDYPNALCNLRFDDTNPVKEDADYVAAIEKDVRWLGFKWAGDIHYSSDYFEQLYDFAIELIKKDKAYVCALDAQQTREYRGSLMTVGKDSPFRNRPISESLDLFARMRAGEFAEGSMMLRAKIDMASPNMKMRDPVLYRIRFAHHHQTGDKWCIYPMYDFTHCISDALEGITHSLCTLEFEDHRPLYDWVLANISIACKPRQIEFSRLNLQYTLTSKRKLHTLIEEKIISAWDDPRMPTISGMRRRGYPAASIREFCKRIGVTKQENTVELASLEACVRENLEANAPRAMAVIDPVKVIISNYDENKTEKLIAAIHPKDESMGTRTVTFSREIFIDRADFREEANKKYKRLVLGKEVRLRNAYVIKADQVIKNDAGEITEIHCSYDPETLGNNPTDGRKVKGVIHWVSAVENQAAEFRIYEPLFLVENPAAAENIDEVLNPNALVIKHGFVESGLSDALAEKAYQFEREGYFCADNKDSSPERLVFNRTVALRDSWGG.

Residues 34–44 (PEPNGYLHIGH) carry the 'HIGH' region motif. ATP-binding positions include 35–37 (EPN) and 41–47 (HIGHAKS). The L-glutamine site is built by Asp68 and Tyr213. Residues Thr232 and 262–263 (RL) each bind ATP. The 'KMSKS' region signature appears at 269–273 (LTSKR).

The protein belongs to the class-I aminoacyl-tRNA synthetase family. Monomer.

The protein localises to the cytoplasm. The catalysed reaction is tRNA(Gln) + L-glutamine + ATP = L-glutaminyl-tRNA(Gln) + AMP + diphosphate. In Psychromonas ingrahamii (strain DSM 17664 / CCUG 51855 / 37), this protein is Glutamine--tRNA ligase.